Here is a 354-residue protein sequence, read N- to C-terminus: 3-isopropylmalate dehydrogenase (354 aa).

73–86 (GPAYDKLDRPLRPE) contacts NAD(+). Residues Arg93, Arg103, Arg131, and Asp221 each contribute to the substrate site. Mg(2+) is bound by residues Asp221, Asp245, and Asp249. Residue 279 to 291 (GSAPDIAGQNLAN) coordinates NAD(+).

This sequence belongs to the isocitrate and isopropylmalate dehydrogenases family. LeuB type 1 subfamily. As to quaternary structure, homodimer. Mg(2+) serves as cofactor. Requires Mn(2+) as cofactor.

It is found in the cytoplasm. It catalyses the reaction (2R,3S)-3-isopropylmalate + NAD(+) = 4-methyl-2-oxopentanoate + CO2 + NADH. It functions in the pathway amino-acid biosynthesis; L-leucine biosynthesis; L-leucine from 3-methyl-2-oxobutanoate: step 3/4. Functionally, catalyzes the oxidation of 3-carboxy-2-hydroxy-4-methylpentanoate (3-isopropylmalate) to 3-carboxy-4-methyl-2-oxopentanoate. The product decarboxylates to 4-methyl-2 oxopentanoate. The sequence is that of 3-isopropylmalate dehydrogenase from Chromobacterium violaceum (strain ATCC 12472 / DSM 30191 / JCM 1249 / CCUG 213 / NBRC 12614 / NCIMB 9131 / NCTC 9757 / MK).